A 159-amino-acid polypeptide reads, in one-letter code: MSFRIGHGYDVHKFTSTKKNIILGGIEIPYEMGLEAHSDGDVLIHALCDAILGALCLGDIGKHFPDTDMEYKNTDSKFFLAEIKKMLDDKEYSISNIDCTIIAQAPKMLPHIEKMKACLASVLEIQINQINIKATTTEQLGFIGRKEGIATHVVCLLNR.

A divalent metal cation is bound by residues aspartate 10 and histidine 12. Residues 10–12 (DVH) and 37–38 (HS) contribute to the 4-CDP-2-C-methyl-D-erythritol 2-phosphate site. Histidine 45 is a binding site for a divalent metal cation. Residues 59 to 61 (DIG), 64 to 68 (FPDTD), 103 to 109 (AQAPKML), 135 to 138 (TTTE), phenylalanine 142, and arginine 145 each bind 4-CDP-2-C-methyl-D-erythritol 2-phosphate.

It belongs to the IspF family. Homotrimer. A divalent metal cation is required as a cofactor.

It catalyses the reaction 4-CDP-2-C-methyl-D-erythritol 2-phosphate = 2-C-methyl-D-erythritol 2,4-cyclic diphosphate + CMP. It functions in the pathway isoprenoid biosynthesis; isopentenyl diphosphate biosynthesis via DXP pathway; isopentenyl diphosphate from 1-deoxy-D-xylulose 5-phosphate: step 4/6. Its function is as follows. Involved in the biosynthesis of isopentenyl diphosphate (IPP) and dimethylallyl diphosphate (DMAPP), two major building blocks of isoprenoid compounds. Catalyzes the conversion of 4-diphosphocytidyl-2-C-methyl-D-erythritol 2-phosphate (CDP-ME2P) to 2-C-methyl-D-erythritol 2,4-cyclodiphosphate (ME-CPP) with a corresponding release of cytidine 5-monophosphate (CMP). The chain is 2-C-methyl-D-erythritol 2,4-cyclodiphosphate synthase from Francisella philomiragia subsp. philomiragia (strain ATCC 25017 / CCUG 19701 / FSC 153 / O#319-036).